We begin with the raw amino-acid sequence, 172 residues long: MSTPARRRLMRDFKRMKEDAPPGVSASPLPDNVMVWNAMIIGPADTPYEDGTFRLLLEFDEEYPNKPPHVKFLSEMFHPNVYANGEICLDILQNRWTPTYDVASILTSIQSLFNDPNPASPANVEAATLFKDHKSQYVKRVKETVEKSWEDDMDDMDDDDDDDDDDDDDEAD.

The region spanning 4 to 150 is the UBC core domain; the sequence is PARRRLMRDF…VKETVEKSWE (147 aa). The active-site Glycyl thioester intermediate is the Cys-88. Position 120 is a phosphoserine; by SGV1 (Ser-120). A disordered region spans residues 145 to 172; the sequence is VEKSWEDDMDDMDDDDDDDDDDDDDEAD. A compositionally biased stretch (acidic residues) spans 151–172; that stretch reads DDMDDMDDDDDDDDDDDDDEAD.

The protein belongs to the ubiquitin-conjugating enzyme family. As to quaternary structure, forms a heterodimer complexes with the E3 enzymes BRE1, RAD18 and UBR1. Also interacts with UBR2, RTF1, PAF1 and the RNA polymerase II hyperphosphorylated form. The interaction with RNA polymerase II is BRE1- and PAF1-dependent. Post-translationally, the N-terminus is blocked.

Its subcellular location is the cytoplasm. It localises to the nucleus. It carries out the reaction S-ubiquitinyl-[E1 ubiquitin-activating enzyme]-L-cysteine + [E2 ubiquitin-conjugating enzyme]-L-cysteine = [E1 ubiquitin-activating enzyme]-L-cysteine + S-ubiquitinyl-[E2 ubiquitin-conjugating enzyme]-L-cysteine.. Its pathway is protein modification; protein ubiquitination. Its function is as follows. E2 ubiquitin-conjugating enzyme that accepts ubiquitin from the ubiquitin-activating enzyme E1 and transfers it to a E3 ubiquitin-protein ligase. In association with the E3 enzyme BRE1 and LGE1, it plays a role in transcription regulation by catalyzing the monoubiquitination of histone H2B to form H2BK123ub1. H2BK123ub1 gives a specific tag for epigenetic transcriptional activation, elongation by RNA polymerase II, telomeric silencing, and is also a prerequisite for H3K4me and H3K79me formation. In association with the E3 enzyme RAD18, it catalyzes the monoubiquitination of POL30 'Lys-164', involved in postreplication repair of UV-damaged DNA. The RAD6/UBC2-RAD18 complex is also involved in prevention of spontaneous mutations caused by 7,8-dihydro-8-oxoguanine. In association with the E3 enzyme UBR1, is involved in N-end rule-dependent protein degradation. Also involved in sporulation. This Saccharomyces cerevisiae (strain ATCC 204508 / S288c) (Baker's yeast) protein is Ubiquitin-conjugating enzyme E2 2 (RAD6).